A 196-amino-acid chain; its full sequence is NADH-quinone oxidoreductase subunit B (196 aa).

[4Fe-4S] cluster-binding residues include Cys-63, Cys-64, Cys-129, and Cys-159.

The protein belongs to the complex I 20 kDa subunit family. In terms of assembly, NDH-1 is composed of 14 different subunits. Subunits NuoB, C, D, E, F, and G constitute the peripheral sector of the complex. It depends on [4Fe-4S] cluster as a cofactor.

Its subcellular location is the cell inner membrane. The catalysed reaction is a quinone + NADH + 5 H(+)(in) = a quinol + NAD(+) + 4 H(+)(out). In terms of biological role, NDH-1 shuttles electrons from NADH, via FMN and iron-sulfur (Fe-S) centers, to quinones in the respiratory chain. The immediate electron acceptor for the enzyme in this species is believed to be a menaquinone. Couples the redox reaction to proton translocation (for every two electrons transferred, four hydrogen ions are translocated across the cytoplasmic membrane), and thus conserves the redox energy in a proton gradient. This Bacteroides fragilis (strain ATCC 25285 / DSM 2151 / CCUG 4856 / JCM 11019 / LMG 10263 / NCTC 9343 / Onslow / VPI 2553 / EN-2) protein is NADH-quinone oxidoreductase subunit B.